The sequence spans 135 residues: Endoribonuclease YbeY (135 aa).

Zn(2+) contacts are provided by H94, H98, and H104.

It belongs to the endoribonuclease YbeY family. The cofactor is Zn(2+).

Its subcellular location is the cytoplasm. Single strand-specific metallo-endoribonuclease involved in late-stage 70S ribosome quality control and in maturation of the 3' terminus of the 16S rRNA. This is Endoribonuclease YbeY from Campylobacter jejuni subsp. jejuni serotype O:2 (strain ATCC 700819 / NCTC 11168).